A 77-amino-acid polypeptide reads, in one-letter code: uncharacterized protein (77 aa).

This is an uncharacterized protein from Dictyostelium discoideum (Social amoeba).